Here is a 612-residue protein sequence, read N- to C-terminus: PAN2-PAN3 deadenylation complex subunit PAN3 (612 aa).

The C3H1-type zinc-finger motif lies at 10–39; it reads WAKDTPCKNITIYGYCKYENDGCIFNHGKP. A compositionally biased stretch (low complexity) spans 44 to 62; sequence SNTGGAAAGSAEDSAASGG. Positions 44–64 are disordered; that stretch reads SNTGGAAAGSAEDSAASGGVT. 2 short sequence motifs (PABPC-interacting motif-2 (PAM-2)) span residues 84–104 and 111–131; these read SVAI…IVSS and TAFT…SANV. The pseudokinase domain stretch occupies residues 231 to 481; sequence QVFPSDGNLP…TIAEFTALFS (251 aa). Residues Arg286, 336-343, and 389-390 each bind ATP; these read DYYPQSNS and DK. A coiled-coil region spans residues 482 to 520; it reads HKMLDIISSSQTYSEYIEQHLSRELENGRLFRLMCKLNF. The interval 521-612 is knob domain; the sequence is IFGRMESSMD…IDSTFRSMTQ (92 aa).

It belongs to the protein kinase superfamily. PAN3 family. In terms of assembly, homodimer. Forms a heterotrimer with a catalytic subunit PAN2 to form the poly(A)-nuclease (PAN) deadenylation complex. Interacts (via PAM-2 motif) with poly(A)-binding protein PAB1 (via PABC domain), conferring substrate specificity of the enzyme complex.

It is found in the cytoplasm. Functionally, regulatory subunit of the poly(A)-nuclease (PAN) deadenylation complex, one of two cytoplasmic mRNA deadenylases involved in mRNA turnover. PAN specifically shortens poly(A) tails of RNA and the activity is stimulated by poly(A)-binding protein PAB1. PAN deadenylation is followed by rapid degradation of the shortened mRNA tails by the CCR4-NOT complex. Deadenylated mRNAs are then degraded by two alternative mechanisms, namely exosome-mediated 3'-5' exonucleolytic degradation, or deadenylation-dependent mRNA decaping and subsequent 5'-3' exonucleolytic degradation by XRN1. May also be involved in post-transcriptional maturation of mRNA poly(A) tails. PAN3 acts as a positive regulator for PAN activity, recruiting the catalytic subunit PAN2 to mRNA via its interaction with RNA and with PAB1. The polypeptide is PAN2-PAN3 deadenylation complex subunit PAN3 (Eremothecium gossypii (strain ATCC 10895 / CBS 109.51 / FGSC 9923 / NRRL Y-1056) (Yeast)).